Consider the following 400-residue polypeptide: S-adenosylmethionine synthase (400 aa).

His17 is a binding site for ATP. Position 19 (Asp19) interacts with Mg(2+). K(+) is bound at residue Glu45. Residues Glu58 and Gln101 each coordinate L-methionine. Residues 101-111 (QSPDIAMGVDQ) form a flexible loop region. ATP is bound by residues 177-179 (DGK), 244-245 (RF), Asp253, 259-260 (RK), Ala276, and Lys280. Asp253 contributes to the L-methionine binding site. Residue Lys284 participates in L-methionine binding.

Belongs to the AdoMet synthase family. As to quaternary structure, homotetramer; dimer of dimers. It depends on Mg(2+) as a cofactor. The cofactor is K(+).

The protein localises to the cytoplasm. It carries out the reaction L-methionine + ATP + H2O = S-adenosyl-L-methionine + phosphate + diphosphate. Its pathway is amino-acid biosynthesis; S-adenosyl-L-methionine biosynthesis; S-adenosyl-L-methionine from L-methionine: step 1/1. Its function is as follows. Catalyzes the formation of S-adenosylmethionine (AdoMet) from methionine and ATP. The overall synthetic reaction is composed of two sequential steps, AdoMet formation and the subsequent tripolyphosphate hydrolysis which occurs prior to release of AdoMet from the enzyme. This Bacillus licheniformis (strain ATCC 14580 / DSM 13 / JCM 2505 / CCUG 7422 / NBRC 12200 / NCIMB 9375 / NCTC 10341 / NRRL NRS-1264 / Gibson 46) protein is S-adenosylmethionine synthase.